Reading from the N-terminus, the 117-residue chain is Immunoglobulin kappa variable 1-5 (117 aa).

A signal peptide spans 1–22 (MDMRVPAQLLGLLLLWLPGAKC). The tract at residues 23–45 (DIQMTQSPSTLSASVGDRVTITC) is framework-1. Residues 24–117 (IQMTQSPSTL…YYCQQYNSYS (94 aa)) enclose the Ig-like domain. A disulfide bridge links Cys45 with Cys110. A complementarity-determining-1 region spans residues 46–56 (RASQSISSWLA). The tract at residues 57–71 (WYQQKPGKAPKLLIY) is framework-2. The complementarity-determining-2 stretch occupies residues 72–78 (KASSLES). Residues 79–110 (GVPSRFSGSGSGTEFTLTISSLQPDDFATYYC) form a framework-3 region. The interval 111–117 (QQYNSYS) is complementarity-determining-3.

Immunoglobulins are composed of two identical heavy chains and two identical light chains; disulfide-linked.

Its subcellular location is the secreted. The protein localises to the cell membrane. Functionally, v region of the variable domain of immunoglobulin light chains that participates in the antigen recognition. Immunoglobulins, also known as antibodies, are membrane-bound or secreted glycoproteins produced by B lymphocytes. In the recognition phase of humoral immunity, the membrane-bound immunoglobulins serve as receptors which, upon binding of a specific antigen, trigger the clonal expansion and differentiation of B lymphocytes into immunoglobulins-secreting plasma cells. Secreted immunoglobulins mediate the effector phase of humoral immunity, which results in the elimination of bound antigens. The antigen binding site is formed by the variable domain of one heavy chain, together with that of its associated light chain. Thus, each immunoglobulin has two antigen binding sites with remarkable affinity for a particular antigen. The variable domains are assembled by a process called V-(D)-J rearrangement and can then be subjected to somatic hypermutations which, after exposure to antigen and selection, allow affinity maturation for a particular antigen. This Homo sapiens (Human) protein is Immunoglobulin kappa variable 1-5.